We begin with the raw amino-acid sequence, 207 residues long: Pyridoxine/pyridoxamine 5'-phosphate oxidase (207 aa).

FMN is bound by residues R53–K58, Y68–T69, K75, and Q97. K58 lines the substrate pocket. Substrate-binding residues include Y115, R119, and S123. Residues Q132–S133 and W177 contribute to the FMN site. Position 183–185 (R183–H185) interacts with substrate. R187 is a binding site for FMN.

The protein belongs to the pyridoxamine 5'-phosphate oxidase family. Homodimer. FMN serves as cofactor.

It catalyses the reaction pyridoxamine 5'-phosphate + O2 + H2O = pyridoxal 5'-phosphate + H2O2 + NH4(+). The catalysed reaction is pyridoxine 5'-phosphate + O2 = pyridoxal 5'-phosphate + H2O2. The protein operates within cofactor metabolism; pyridoxal 5'-phosphate salvage; pyridoxal 5'-phosphate from pyridoxamine 5'-phosphate: step 1/1. It functions in the pathway cofactor metabolism; pyridoxal 5'-phosphate salvage; pyridoxal 5'-phosphate from pyridoxine 5'-phosphate: step 1/1. Its function is as follows. Catalyzes the oxidation of either pyridoxine 5'-phosphate (PNP) or pyridoxamine 5'-phosphate (PMP) into pyridoxal 5'-phosphate (PLP). This Bartonella quintana (strain Toulouse) (Rochalimaea quintana) protein is Pyridoxine/pyridoxamine 5'-phosphate oxidase.